Consider the following 252-residue polypeptide: Neurexophilin-3 (252 aa).

An N-terminal signal peptide occupies residues 1 to 22; that stretch reads MQLTRCCFVFLVQGSLYLVICG. The II stretch occupies residues 23 to 75; that stretch reads QDDGPPGSEDPERDDHEGQPRPRVPRKRGHISPKSRPMANSTLLGLLAPPGEA. A disordered region spans residues 27-58; it reads PPGSEDPERDDHEGQPRPRVPRKRGHISPKSR. The span at 45 to 55 shows a compositional bias: basic residues; that stretch reads RVPRKRGHISP. N-linked (GlcNAc...) asparagine glycans are attached at residues Asn62, Asn127, Asn137, and Asn143. An III region spans residues 76–157; that stretch reads WGILGQPPNR…LVPPSKAVEF (82 aa). The interval 158–166 is IV (linker domain); it reads HQEQQIFIE. The segment at 167-252 is v (Cys-rich); it reads AKASKIFNCR…HSDTPYYPSG (86 aa).

It belongs to the neurexophilin family. May be proteolytically processed at the boundary between the N-terminal non-conserved and the central conserved domain in neuron-like cells. As to expression, highest level in brain.

It is found in the secreted. May be signaling molecules that resemble neuropeptides. Ligand for alpha-neurexins. This chain is Neurexophilin-3 (NXPH3), found in Homo sapiens (Human).